Reading from the N-terminus, the 134-residue chain is Profilin-3 (134 aa).

The cysteines at positions 13 and 118 are disulfide-linked. Positions 84–100 match the Involved in PIP2 interaction motif; it reads AVIRGKKGSGGITIKKT. Position 114 is a phosphothreonine (Thr114).

It belongs to the profilin family. As to quaternary structure, occurs in many kinds of cells as a complex with monomeric actin in a 1:1 ratio. In terms of processing, phosphorylated by MAP kinases.

Its subcellular location is the cytoplasm. It is found in the cytoskeleton. Functionally, binds to actin and affects the structure of the cytoskeleton. At high concentrations, profilin prevents the polymerization of actin, whereas it enhances it at low concentrations. This is Profilin-3 from Olea europaea (Common olive).